The following is a 175-amino-acid chain: Probable DNA replication complex GINS protein PSF2 (175 aa).

Belongs to the GINS2/PSF2 family. As to quaternary structure, component of the GINS complex which is a heterotetramer of SLD5, PSF1, PSF2 and PSF3.

The protein resides in the nucleus. The GINS complex plays an essential role in the initiation of DNA replication. In Encephalitozoon cuniculi (strain GB-M1) (Microsporidian parasite), this protein is Probable DNA replication complex GINS protein PSF2.